Here is a 164-residue protein sequence, read N- to C-terminus: uncharacterized protein (164 aa).

Serine 117 carries the phosphoserine modification.

This is an uncharacterized protein from Bacillus subtilis (strain 168).